Reading from the N-terminus, the 261-residue chain is Hydrolase in agr operon (261 aa).

One can recognise a CN hydrolase domain in the interval 1–239 (MKVQIYQLPI…ADILTVDLNL (239 aa)). E41 functions as the Proton acceptor in the catalytic mechanism. K110 (proton donor) is an active-site residue. C146 functions as the Nucleophile in the catalytic mechanism.

It belongs to the carbon-nitrogen hydrolase superfamily. NIT1/NIT2 family.

This is Hydrolase in agr operon from Staphylococcus aureus.